The primary structure comprises 214 residues: GTP cyclohydrolase 1 (214 aa).

Zn(2+) is bound by residues Cys108, His111, and Cys179.

Belongs to the GTP cyclohydrolase I family. In terms of assembly, toroid-shaped homodecamer, composed of two pentamers of five dimers.

It carries out the reaction GTP + H2O = 7,8-dihydroneopterin 3'-triphosphate + formate + H(+). It participates in cofactor biosynthesis; 7,8-dihydroneopterin triphosphate biosynthesis; 7,8-dihydroneopterin triphosphate from GTP: step 1/1. The protein is GTP cyclohydrolase 1 of Shewanella putrefaciens (strain CN-32 / ATCC BAA-453).